The primary structure comprises 311 residues: Olfactory receptor 5P3 (311 aa).

Over 1 to 25 (MGTGNDTTVVEFTLLGLSEDTTVCA) the chain is Extracellular. Asn5 carries N-linked (GlcNAc...) asparagine glycosylation. A helical transmembrane segment spans residues 26–46 (ILFLVFLGIYVVTLMGNISII). At 47-54 (VLIRRSHH) the chain is on the cytoplasmic side. Residues 55 to 75 (LHTPMYIFLCHLAFVDIGYSS) traverse the membrane as a helical segment. At 76–99 (SVTPVMLMSFLRKETSLPVAGCVA) the chain is on the extracellular side. Cysteines 97 and 189 form a disulfide. Residues 100 to 120 (QLCSVVTFGTAECFLLAAMAY) form a helical membrane-spanning segment. Residues 121 to 139 (DRYVAICSPLLYSTCMSPG) lie on the Cytoplasmic side of the membrane. A helical transmembrane segment spans residues 140–160 (VCIILVGMSYLGGCVNAWTFI). Over 161–196 (GCLLRLSFCGPNKVNHFFCDYSPLLKLACSHDFTFE) the chain is Extracellular. The helical transmembrane segment at 197 to 217 (IIPAISSGSIIVATVCVIAIS) threads the bilayer. The Cytoplasmic segment spans residues 218-237 (YIYILITILKMHSTKGRHKA). The chain crosses the membrane as a helical span at residues 238 to 258 (FSTCTSHLTAVTLFYGTITFI). The Extracellular portion of the chain corresponds to 259-271 (YVMPKSSYSTDQN). Residues 272-292 (KVVSVFYTVVIPMLNPLIYSL) form a helical membrane-spanning segment. Residues 293 to 311 (RNKEIKGALKRELRIKIFS) are Cytoplasmic-facing.

This sequence belongs to the G-protein coupled receptor 1 family. Expressed in the tongue.

Its subcellular location is the cell membrane. Its function is as follows. Odorant receptor (Potential). May be involved in taste perception. The polypeptide is Olfactory receptor 5P3 (OR5P3) (Homo sapiens (Human)).